A 361-amino-acid polypeptide reads, in one-letter code: MNRNQHKPMFVTFLINILLLQLLNLTNASPSPPITALYAFGDSTVDSGNNNYIPTLFQSNHPPYGKSFPSKLSTGRFSDGKLATDFIVSSLGLKPTLPAYLNPSVKPVDLLTGVSFASAGGGLDDRTAKSSLTITMDKQWSYFEEALGKMKSLVGDSETNRVIKNAVFVISAGTNDMIFNVYDHVLGSLISVSDYQDSLLTKVEVFVQRLYEAGARRITIAGLPPIGCLPVQVTLTSINTPRIFHHRICTEHQNDDSRVYNQKLQKLIFGLSQRFRGSKVLYLDIYSPLIDMIKHPRKYGLEETLRGCCGTGLLEAGPLCQPLSRTCDDVSKYLFFDSVHPSQTAYSVIASFALQKLFPLL.

An N-terminal signal peptide occupies residues 1–28; it reads MNRNQHKPMFVTFLINILLLQLLNLTNA. Catalysis depends on Ser-43, which acts as the Nucleophile. Active-site residues include Asp-337 and His-340.

It belongs to the 'GDSL' lipolytic enzyme family.

It localises to the secreted. The sequence is that of GDSL esterase/lipase At2g40250 from Arabidopsis thaliana (Mouse-ear cress).